The primary structure comprises 339 residues: Fructose-1,6-bisphosphatase, cytosolic (339 aa).

Mg(2+) is bound by residues E70, E99, D120, L122, and D123. Residues 123–126 (DGSS), N214, Y246, Y266, and K276 each bind substrate. Residue E282 participates in Mg(2+) binding.

This sequence belongs to the FBPase class 1 family. Mg(2+) is required as a cofactor.

The protein resides in the cytoplasm. It catalyses the reaction beta-D-fructose 1,6-bisphosphate + H2O = beta-D-fructose 6-phosphate + phosphate. The chain is Fructose-1,6-bisphosphatase, cytosolic from Brassica napus (Rape).